A 249-amino-acid polypeptide reads, in one-letter code: Ribosomal RNA small subunit methyltransferase J (249 aa).

S-adenosyl-L-methionine is bound by residues 99–100 (RD), 115–116 (ER), 151–152 (SS), and Asp169.

It belongs to the methyltransferase superfamily. RsmJ family.

Its subcellular location is the cytoplasm. It carries out the reaction guanosine(1516) in 16S rRNA + S-adenosyl-L-methionine = N(2)-methylguanosine(1516) in 16S rRNA + S-adenosyl-L-homocysteine + H(+). Its function is as follows. Specifically methylates the guanosine in position 1516 of 16S rRNA. The protein is Ribosomal RNA small subunit methyltransferase J of Shewanella oneidensis (strain ATCC 700550 / JCM 31522 / CIP 106686 / LMG 19005 / NCIMB 14063 / MR-1).